The primary structure comprises 246 residues: 2-aminoethylphosphonate cytidylyltransferase (246 aa).

Residues A19, G20, K34, S97, E114, and A115 each contribute to the CMP-(2-aminoethyl)phosphonate site. 2 residues coordinate Mg(2+): D116 and D145. Positions 145, 161, and 202 each coordinate CMP-(2-aminoethyl)phosphonate. Mg(2+)-binding residues include E226 and D228.

This sequence belongs to the LicC/PntC cytidylyltransferase family. Monomer. It depends on Mg(2+) as a cofactor.

The catalysed reaction is (2-aminoethyl)phosphonate + CTP = CMP-(2-aminoethyl)phosphonate + diphosphate. It functions in the pathway phosphorus metabolism; phosphonate biosynthesis. Its function is as follows. Cytidylyltransferase involved in the biosynthesis of cell-surface phosphonates. Catalyzes the activation of 2-aminoethylphosphonate (AEP) to CMP-2-aminoethylphosphonate (CMP-AEP). Can also use phosphocholine, with much lower efficiency. Exhibits strong activity towards CTP, limited activity towards ATP and no activity with GTP. The chain is 2-aminoethylphosphonate cytidylyltransferase from Lancefieldella rimae (strain ATCC 49626 / DSM 7090 / CCUG 31168 / NBRC 15546 / VPI D140H-11A) (Atopobium rimae).